Reading from the N-terminus, the 942-residue chain is Valine--tRNA ligase (942 aa).

A 'HIGH' region motif is present at residues 43–53; that stretch reads PNVTGTLHMGH. The 'KMSKS' region signature appears at 551-555; that stretch reads KMSKS. Lys-554 serves as a coordination point for ATP. A coiled-coil region spans residues 876-942; that stretch reads EGLVDLDAER…AGLREQRAKL (67 aa).

This sequence belongs to the class-I aminoacyl-tRNA synthetase family. ValS type 1 subfamily. Monomer.

It is found in the cytoplasm. It catalyses the reaction tRNA(Val) + L-valine + ATP = L-valyl-tRNA(Val) + AMP + diphosphate. Its function is as follows. Catalyzes the attachment of valine to tRNA(Val). As ValRS can inadvertently accommodate and process structurally similar amino acids such as threonine, to avoid such errors, it has a 'posttransfer' editing activity that hydrolyzes mischarged Thr-tRNA(Val) in a tRNA-dependent manner. The sequence is that of Valine--tRNA ligase from Stenotrophomonas maltophilia (strain R551-3).